Reading from the N-terminus, the 389-residue chain is Lipid-A-disaccharide synthase (389 aa).

Belongs to the LpxB family.

The catalysed reaction is a lipid X + a UDP-2-N,3-O-bis[(3R)-3-hydroxyacyl]-alpha-D-glucosamine = a lipid A disaccharide + UDP + H(+). The protein operates within bacterial outer membrane biogenesis; LPS lipid A biosynthesis. In terms of biological role, condensation of UDP-2,3-diacylglucosamine and 2,3-diacylglucosamine-1-phosphate to form lipid A disaccharide, a precursor of lipid A, a phosphorylated glycolipid that anchors the lipopolysaccharide to the outer membrane of the cell. This Burkholderia vietnamiensis (strain G4 / LMG 22486) (Burkholderia cepacia (strain R1808)) protein is Lipid-A-disaccharide synthase.